The following is a 1394-amino-acid chain: Tubulin glycylase 3E (1394 aa).

Disordered regions lie at residues 201–230, 563–582, 620–663, and 682–706; these read KKKSNFQNKSQSQLNNHKNEEKKPSQQRKE, NQKDLQSNQTSSVISQQNSI, DENE…TSNF, and STVKNSDNNNQNQTNPQNQNTNLKE. Positions 205-216 are enriched in low complexity; the sequence is NFQNKSQSQLNN. The segment covering 217 to 230 has biased composition (basic and acidic residues); that stretch reads HKNEEKKPSQQRKE. The span at 568 to 582 shows a compositional bias: low complexity; sequence QSNQTSSVISQQNSI. A compositionally biased stretch (polar residues) spans 627-655; sequence KENVLQQKKNQSNQIVTSQQQSNNYFKQE. Over residues 682 to 703 the composition is skewed to low complexity; it reads STVKNSDNNNQNQTNPQNQNTN. Positions 911–1250 constitute a TTL domain; the sequence is RFIFNITVIA…QNNLQEDLEI (340 aa). ATP is bound by residues 1058 to 1061, K1079, and D1081; that span reads QKYI. IQ domains follow at residues 1320 to 1349 and 1348 to 1377; these read QYWGAIKIQSKIRSFLAKKKLQRLKNQKFT and FTFAAIKIQQKMRQFLAKKQLNILKKQQQT.

It localises to the cell projection. The protein resides in the cilium. It is found in the cytoplasm. Its subcellular location is the cytoskeleton. The protein localises to the cilium axoneme. In terms of biological role, probable glycylase which modifies tubulin, generating side chains of glycine on the gamma-carboxyl groups of specific glutamate residues within the C-terminal tail of tubulin. The sequence is that of Tubulin glycylase 3E (TTLL3E) from Tetrahymena thermophila (strain SB210).